The following is a 301-amino-acid chain: MVVTFQHVPVMVAEVVAALAPRPGGRYIDATVGGGGHALAVLQAARPGGRLLGIDADPAALVATADRLAEAGLREHAVLCHGSFADLAVIAGETGFINVDGILFDLGVSSYQLDTPERGFSFAADGPLDMRLDPTQGPTAADLVNTLSERELADVIFQYGEEHAARRIARAIVERRRTQPFQRTADLAAVIARVVGGRRGRIHPATRTFQALRIAVNRELDRLAAALPQAVHLLAPGGRLVVISFHSLEDRIVKQFMRAEAEGATPRLVINTKKPVAATDDEVATNPRARSAKLRVATRIV.

S-adenosyl-L-methionine-binding positions include 35–37 (GGH), Asp-55, Phe-84, Asp-105, and Gln-112.

This sequence belongs to the methyltransferase superfamily. RsmH family.

It localises to the cytoplasm. It catalyses the reaction cytidine(1402) in 16S rRNA + S-adenosyl-L-methionine = N(4)-methylcytidine(1402) in 16S rRNA + S-adenosyl-L-homocysteine + H(+). In terms of biological role, specifically methylates the N4 position of cytidine in position 1402 (C1402) of 16S rRNA. This Chloroflexus aggregans (strain MD-66 / DSM 9485) protein is Ribosomal RNA small subunit methyltransferase H.